Here is a 118-residue protein sequence, read N- to C-terminus: Ribonuclease P protein component (118 aa).

The protein belongs to the RnpA family. As to quaternary structure, consists of a catalytic RNA component (M1 or rnpB) and a protein subunit.

It catalyses the reaction Endonucleolytic cleavage of RNA, removing 5'-extranucleotides from tRNA precursor.. Its function is as follows. RNaseP catalyzes the removal of the 5'-leader sequence from pre-tRNA to produce the mature 5'-terminus. It can also cleave other RNA substrates such as 4.5S RNA. The protein component plays an auxiliary but essential role in vivo by binding to the 5'-leader sequence and broadening the substrate specificity of the ribozyme. This chain is Ribonuclease P protein component, found in Levilactobacillus brevis (strain ATCC 367 / BCRC 12310 / CIP 105137 / JCM 1170 / LMG 11437 / NCIMB 947 / NCTC 947) (Lactobacillus brevis).